The following is a 552-amino-acid chain: TBCC domain-containing protein 1 (552 aa).

Residues 304–435 (PRLHRIVVMS…LEDHMARTGL (132 aa)) enclose the C-CAP/cofactor C-like domain.

It belongs to the TBCC family. As to expression, expressed in brain and testis (at protein level).

It is found in the cytoplasm. The protein localises to the cytoskeleton. The protein resides in the microtubule organizing center. Its subcellular location is the centrosome. It localises to the spindle pole. Functionally, plays a role in the regulation of centrosome and Golgi apparatus positioning, with consequences on cell shape and cell migration. This Mus musculus (Mouse) protein is TBCC domain-containing protein 1 (Tbccd1).